The following is a 358-amino-acid chain: 3-dehydroquinate synthase (358 aa).

Residues 102 to 106, 126 to 127, Lys-139, and Lys-148 contribute to the NAD(+) site; these read GVVGD and TT. Zn(2+)-binding residues include Glu-181, His-244, and His-260.

The protein belongs to the sugar phosphate cyclases superfamily. Dehydroquinate synthase family. Co(2+) serves as cofactor. Zn(2+) is required as a cofactor. The cofactor is NAD(+).

It localises to the cytoplasm. The enzyme catalyses 7-phospho-2-dehydro-3-deoxy-D-arabino-heptonate = 3-dehydroquinate + phosphate. It participates in metabolic intermediate biosynthesis; chorismate biosynthesis; chorismate from D-erythrose 4-phosphate and phosphoenolpyruvate: step 2/7. Catalyzes the conversion of 3-deoxy-D-arabino-heptulosonate 7-phosphate (DAHP) to dehydroquinate (DHQ). The protein is 3-dehydroquinate synthase of Symbiobacterium thermophilum (strain DSM 24528 / JCM 14929 / IAM 14863 / T).